The primary structure comprises 232 residues: Large ribosomal subunit protein uL1 (232 aa).

Belongs to the universal ribosomal protein uL1 family. Part of the 50S ribosomal subunit.

In terms of biological role, binds directly to 23S rRNA. The L1 stalk is quite mobile in the ribosome, and is involved in E site tRNA release. Its function is as follows. Protein L1 is also a translational repressor protein, it controls the translation of the L11 operon by binding to its mRNA. The sequence is that of Large ribosomal subunit protein uL1 from Maricaulis maris (strain MCS10) (Caulobacter maris).